The following is a 338-amino-acid chain: D-erythrose-4-phosphate dehydrogenase (338 aa).

12 to 13 (RI) provides a ligand contact to NAD(+). Residues 154 to 156 (SCT), R200, 213 to 214 (TK), and R236 each bind substrate. The Nucleophile role is filled by C155. N318 contacts NAD(+).

Belongs to the glyceraldehyde-3-phosphate dehydrogenase family. Epd subfamily. In terms of assembly, homotetramer.

The protein localises to the cytoplasm. The catalysed reaction is D-erythrose 4-phosphate + NAD(+) + H2O = 4-phospho-D-erythronate + NADH + 2 H(+). It participates in cofactor biosynthesis; pyridoxine 5'-phosphate biosynthesis; pyridoxine 5'-phosphate from D-erythrose 4-phosphate: step 1/5. Functionally, catalyzes the NAD-dependent conversion of D-erythrose 4-phosphate to 4-phosphoerythronate. This is D-erythrose-4-phosphate dehydrogenase from Yersinia pestis bv. Antiqua (strain Antiqua).